Here is a 410-residue protein sequence, read N- to C-terminus: MTQTSNNSDLRNGPDANGLFGSFGGRYVAETLMPLILDLAREYEAAKEDPAFKEELAYFQRDYVGRPSPLYFAERLTEFCGGAKIYLKREELNHTGAHKINNCIGQILLARRMGKKRIIAETGAGMHGVATATVAARFGLDCVIYMGTTDIERQQANVFRMKLLGAEVIPVVAGTGTLKDAMNEALRDWVTNVDSTFYLIGTVAGPHPYPAMVRDFQAVIGKETRDQLQAQEGRLPDSLVACIGGGSNAMGLFHPFLDDKSVEIIGVEAAGYGIETGKHAASLNGGVPGVLHGNRTFLLQDDDGQIIDAHSISAGLDYPGIGPEHAWLHDIGRVQYTSVTDDEALAAFHQCCRLEGIIPALESAHALAEVFKRAPKLPKDHLMVVNLSGRGDKDMQTVMHHMETSKQEKH.

Lys-99 carries the post-translational modification N6-(pyridoxal phosphate)lysine.

Belongs to the TrpB family. In terms of assembly, tetramer of two alpha and two beta chains. Pyridoxal 5'-phosphate serves as cofactor.

It catalyses the reaction (1S,2R)-1-C-(indol-3-yl)glycerol 3-phosphate + L-serine = D-glyceraldehyde 3-phosphate + L-tryptophan + H2O. It participates in amino-acid biosynthesis; L-tryptophan biosynthesis; L-tryptophan from chorismate: step 5/5. Its function is as follows. The beta subunit is responsible for the synthesis of L-tryptophan from indole and L-serine. The protein is Tryptophan synthase beta chain of Pseudomonas fluorescens (strain Pf0-1).